Consider the following 33-residue polypeptide: Cysteine-rich venom protein tripurin (33 aa).

This sequence belongs to the CRISP family. In terms of processing, contains 8 disulfide bonds. Expressed by the venom gland.

The protein resides in the secreted. In terms of biological role, blocks contraction of smooth muscle elicited by high potassium-induced depolarization, but does not block caffeine-stimulated contraction. May target voltage-gated calcium channels on smooth muscle. The protein is Cysteine-rich venom protein tripurin of Trimeresurus purpureomaculatus (Mangrove pit viper).